The chain runs to 414 residues: MIOREX complex component 10 (414 aa).

Residues M1–Q29 constitute a mitochondrion transit peptide. Residues N30–T373 lie on the Mitochondrial matrix side of the membrane. Residues F374–F394 traverse the membrane as a helical segment. Topologically, residues Y395–K414 are mitochondrial intermembrane.

It belongs to the RMD1/sif2 family. In terms of assembly, associates with the mitochondrial ribosome.

It localises to the mitochondrion inner membrane. Component of MIOREX complexes, large expressome-like assemblies of ribosomes with factors involved in all the steps of post-transcriptional gene expression. This chain is MIOREX complex component 10, found in Saccharomyces cerevisiae (strain ATCC 204508 / S288c) (Baker's yeast).